The primary structure comprises 385 residues: Zinc cluster transcription factor CZF1 (385 aa).

Residues Met-1–Thr-19 show a composition bias toward polar residues. 3 disordered regions span residues Met-1–Leu-117, Leu-154–Asp-216, and Ser-233–Thr-308. The span at Ser-20–Ser-38 shows a compositional bias: low complexity. Polar residues-rich tracts occupy residues Tyr-52 to Thr-67 and Tyr-88 to Arg-97. 2 stretches are compositionally biased toward low complexity: residues Leu-102–Leu-117 and Leu-154–Leu-169. A compositionally biased stretch (polar residues) spans Asn-170 to Glu-200. Composition is skewed to low complexity over residues Gln-201–Gln-214 and Ser-233–Gln-256. Basic residues predominate over residues Lys-265 to Arg-275. Positions Glu-279–Ala-291 are enriched in polar residues. The zn(2)-C6 fungal-type DNA-binding region spans Cys-315–Cys-342. Positions Pro-345 to Thr-364 are disordered. Residues Gly-348–Thr-364 show a composition bias toward basic and acidic residues.

As to quaternary structure, interacts with EFG1.

It localises to the nucleus. In terms of biological role, transcriptional regulator of the switch between 2 heritable states, the white and opaque states. These 2 cell types differ in many characteristics, including cell structure, mating competence, and virulence. Each state is heritable for many generations, and switching between states occurs stochastically, at low frequency. Contributes to formation of the opaque state, but is not necessary for heritability of the opaque state. Plays a role in cell adhesion and pseudohyphal growth. Involved in acquisition of drug resistance and acts as a repressor of beta-glucan synthesis, thus negatively regulating cell wall integrity. Plays a role in adherence, invasion and damage to oral epithelial cells. The polypeptide is Zinc cluster transcription factor CZF1 (CZF1) (Candida albicans (strain SC5314 / ATCC MYA-2876) (Yeast)).